A 603-amino-acid polypeptide reads, in one-letter code: Ankyrin repeat and LEM domain-containing protein 2 homolog (603 aa).

A helical; Signal-anchor for type III membrane protein membrane pass occupies residues 2 to 22 (GRKSAILAVILAIIYFRSNFS). 2 ANK repeats span residues 161–190 (FRYN…NIDF) and 221–250 (NSDT…TDRT). Disordered stretches follow at residues 446-465 (ISEN…DDDD) and 505-538 (LPPP…PPPT). Residues 456-465 (DSADDEDDDD) are compositionally biased toward acidic residues.

Belongs to the ANKLE2 family. Interacts with baf-1. Interacts with protein phosphatase 2A (PP2A) components.

Its subcellular location is the nucleus membrane. Its function is as follows. Involved in mitotic nuclear envelope reassembly by promoting dephosphorylation of baf-1 during mitotic exit. Coordinates the control of baf-1 dephosphorylation by inhibiting VRK1 kinase and promoting dephosphorylation of baf-1 by protein phosphatase 2A (PP2A), thereby facilitating nuclear envelope assembly. It is unclear whether it acts as a real PP2A regulatory subunit or whether it is involved in recruitment of the PP2A complex. In Caenorhabditis elegans, this protein is Ankyrin repeat and LEM domain-containing protein 2 homolog (lem-4).